Here is a 105-residue protein sequence, read N- to C-terminus: Large ribosomal subunit protein uL24 (105 aa).

This sequence belongs to the universal ribosomal protein uL24 family. Part of the 50S ribosomal subunit.

Its function is as follows. One of two assembly initiator proteins, it binds directly to the 5'-end of the 23S rRNA, where it nucleates assembly of the 50S subunit. One of the proteins that surrounds the polypeptide exit tunnel on the outside of the subunit. This is Large ribosomal subunit protein uL24 from Novosphingobium aromaticivorans (strain ATCC 700278 / DSM 12444 / CCUG 56034 / CIP 105152 / NBRC 16084 / F199).